A 440-amino-acid polypeptide reads, in one-letter code: Long-chain alkane monooxygenase (440 aa).

Residues D58, 137 to 138 (SH), Y158, and 227 to 230 (AGMS) each bind FMN.

This sequence belongs to the NtaA/SnaA/DszA monooxygenase family. Homodimer.

It is found in the secreted. It catalyses the reaction a long-chain alkane + FMNH2 + O2 = a long chain fatty alcohol + FMN + H2O + H(+). Its function is as follows. Involved in the degradation of long-chain alkanes. Converts alkanes ranging from C(15) to C(36) into their corresponding primary alcohols. This is Long-chain alkane monooxygenase from Geobacillus thermodenitrificans (strain NG80-2).